We begin with the raw amino-acid sequence, 133 residues long: Small ribosomal subunit protein bS6 (133 aa).

The tract at residues lysine 93–alanine 133 is disordered. Over residues methionine 103 to alanine 133 the composition is skewed to basic and acidic residues.

The protein belongs to the bacterial ribosomal protein bS6 family.

Functionally, binds together with bS18 to 16S ribosomal RNA. The protein is Small ribosomal subunit protein bS6 of Alteromonas mediterranea (strain DSM 17117 / CIP 110805 / LMG 28347 / Deep ecotype).